We begin with the raw amino-acid sequence, 158 residues long: Ecotin-like protein 2 (158 aa).

Belongs to the protease inhibitor I11 (ecotin) family.

This Leishmania major protein is Ecotin-like protein 2.